Consider the following 445-residue polypeptide: RCC1 domain-containing protein RUG3, mitochondrial (445 aa).

The transit peptide at 1–22 (MAALSHRLRSFTRRFSSTRTTQ) directs the protein to the mitochondrion. RCC1 repeat units lie at residues 47–101 (TLQL…DSSS), 118–169 (DGDL…ALTH), 171–221 (GDVF…AITE), 222–279 (SGEL…ALTK), 280–331 (EGQL…ALTE), 333–383 (GKVL…AITD), and 385–442 (GELW…CLVS).

In terms of assembly, interacts with ATM. In terms of tissue distribution, mostly expressed in roots and rosette leaves of young seedlings, and, to a lower extent, in the flowers and siliques of mature plants. Preferentially expressed in the vascular tissues.

Its subcellular location is the mitochondrion. Regulates DNA damage response (DDR) synergistically with ATM. Together with ATM, involved in the splicing of the ND2/NAD2 mRNA. Required for the accumulation of mitochondrial respiratory chain complex I. Negative regulator of plant responses to abscisic acid (ABA). May have a pivotal role in vegetative growth and the phase transition from vegetative to reproductive growth. The chain is RCC1 domain-containing protein RUG3, mitochondrial from Arabidopsis thaliana (Mouse-ear cress).